A 373-amino-acid polypeptide reads, in one-letter code: Alcohol dehydrogenase 2 (373 aa).

Zn(2+) is bound by residues Cys47, Thr49, His69, Cys99, Cys102, Cys105, Cys113, and Cys177. The an alcohol site is built by Thr49 and His69. Thr49 provides a ligand contact to NAD(+). NAD(+)-binding positions include Gly202 to Gly207, Asp226, Lys231, Thr272, Phe316, and Arg366.

It belongs to the zinc-containing alcohol dehydrogenase family. Homodimer. Zn(2+) serves as cofactor.

The protein resides in the cytoplasm. The catalysed reaction is a primary alcohol + NAD(+) = an aldehyde + NADH + H(+). It carries out the reaction a secondary alcohol + NAD(+) = a ketone + NADH + H(+). This Hordeum vulgare (Barley) protein is Alcohol dehydrogenase 2 (ADH2).